The following is a 244-amino-acid chain: 14-3-3 protein homolog 1 (244 aa).

Belongs to the 14-3-3 family.

This is 14-3-3 protein homolog 1 from Echinococcus multilocularis (Fox tapeworm).